The sequence spans 368 residues: MLFKKFTWVIPSLFLTIISTSLLISCATKSDNTLIFNISLDHNADTSIEKFFTVFSKKLSGKLNKKINVNFNIVDDSFTKINNIQANKADFAFVNSQAIASNNWFGYTPLIQTLTTAFKEDLELDYYEDGNLQKKAEKTNLLFLSPPYKEWDDIKQKWTGNRYDFLYEPSKLVSFYRSMILITGSASEITAIKKAWNEKNWNQFMKFGIGHGQTNSASRFELPDLLFRKHFAKNYPGLQNAINSDPDKFAVVRGREIGINKNIKIVFDDANSFSWTQNIKGSKRPFYTPIDPNDRLEILTYSDPLLYDIGIVSNNLSRIYQKAIGEIFIELAQSSEDLYGPSIGYNGYKMINDFEKEVVEIIEKTYGK.

A signal peptide spans 1-25 (MLFKKFTWVIPSLFLTIISTSLLIS). Cys26 carries N-palmitoyl cysteine lipidation. The S-diacylglycerol cysteine moiety is linked to residue Cys26.

The protein localises to the cell membrane. P37 is part of a high-affinity transport system. The chain is High affinity transport system protein p37 (p37) from Mycoplasma genitalium (strain ATCC 33530 / DSM 19775 / NCTC 10195 / G37) (Mycoplasmoides genitalium).